The chain runs to 181 residues: MDDLTAQALKDFTARYCDAWHEEHKSWPLSEELYGVPSPCIISTTEDAVYWQPQPFTGEQNVNAVERAFDIVIQPTIHTFYTTQFAGDMHAQFGDIKLTLLQTWSEDDFRRVQENLIGHLVTQKRLKLPPTLFIATLEEELEVISVCNLSGEVCKETLGTRKRTHLAPNLAEFLNQLKPLL.

The protein belongs to the Syd family.

The protein localises to the cell inner membrane. Interacts with the SecY protein in vivo. May bind preferentially to an uncomplexed state of SecY, thus functioning either as a chelating agent for excess SecY in the cell or as a regulatory factor that negatively controls the translocase function. The protein is Protein Syd of Escherichia coli O157:H7.